The sequence spans 104 residues: N(4)-acetylcytidine amidohydrolase (104 aa).

One can recognise an ASCH domain in the interval 6–94; the sequence is ITFFQRFQND…IAEIYPNQTQ (89 aa). The Proton acceptor role is filled by Lys-21. Thr-24 serves as the catalytic Nucleophile. Glu-74 functions as the Proton donor in the catalytic mechanism.

Belongs to the N(4)-acetylcytidine amidohydrolase family.

The enzyme catalyses N(4)-acetylcytidine + H2O = cytidine + acetate + H(+). The catalysed reaction is N(4)-acetyl-2'-deoxycytidine + H2O = 2'-deoxycytidine + acetate + H(+). It catalyses the reaction N(4)-acetylcytosine + H2O = cytosine + acetate + H(+). Catalyzes the hydrolysis of N(4)-acetylcytidine (ac4C). The sequence is that of N(4)-acetylcytidine amidohydrolase (yqfB) from Salmonella agona (strain SL483).